A 305-amino-acid polypeptide reads, in one-letter code: NAD kinase 2 (305 aa).

Asp-78 functions as the Proton acceptor in the catalytic mechanism. Residues 78-79 (DG), 152-153 (NE), Asp-182, 193-198 (TAYSLS), and Asn-251 each bind NAD(+).

Belongs to the NAD kinase family. A divalent metal cation serves as cofactor.

The protein resides in the cytoplasm. It carries out the reaction NAD(+) + ATP = ADP + NADP(+) + H(+). Involved in the regulation of the intracellular balance of NAD and NADP, and is a key enzyme in the biosynthesis of NADP. Catalyzes specifically the phosphorylation on 2'-hydroxyl of the adenosine moiety of NAD to yield NADP. Functions as a growth repressor under light-activated heterotrophic growth conditions and light and dark cycle conditions in the presence of glucose. NADP(H)/NAD(H) maintenance by slr0400 probably plays a significant role in modulating glycolysis and the TCA cycle to repress the growth rate and maintain the photosynthetic capacity. This Synechocystis sp. (strain ATCC 27184 / PCC 6803 / Kazusa) protein is NAD kinase 2.